The sequence spans 480 residues: uncharacterized protein (480 aa).

The interval 1 to 20 (MDVKDTGINRSDTPISDQDH) is disordered.

This is an uncharacterized protein from Arabidopsis thaliana (Mouse-ear cress).